Reading from the N-terminus, the 107-residue chain is Nucleoid-associated protein MCA1327 (107 aa).

This sequence belongs to the YbaB/EbfC family. In terms of assembly, homodimer.

The protein localises to the cytoplasm. It is found in the nucleoid. Functionally, binds to DNA and alters its conformation. May be involved in regulation of gene expression, nucleoid organization and DNA protection. The chain is Nucleoid-associated protein MCA1327 from Methylococcus capsulatus (strain ATCC 33009 / NCIMB 11132 / Bath).